A 369-amino-acid chain; its full sequence is 4-hydroxy-3-methylbut-2-en-1-yl diphosphate synthase (flavodoxin) (369 aa).

[4Fe-4S] cluster contacts are provided by Cys-270, Cys-273, Cys-305, and Glu-312.

The protein belongs to the IspG family. [4Fe-4S] cluster serves as cofactor.

It catalyses the reaction (2E)-4-hydroxy-3-methylbut-2-enyl diphosphate + oxidized [flavodoxin] + H2O + 2 H(+) = 2-C-methyl-D-erythritol 2,4-cyclic diphosphate + reduced [flavodoxin]. It functions in the pathway isoprenoid biosynthesis; isopentenyl diphosphate biosynthesis via DXP pathway; isopentenyl diphosphate from 1-deoxy-D-xylulose 5-phosphate: step 5/6. Its function is as follows. Converts 2C-methyl-D-erythritol 2,4-cyclodiphosphate (ME-2,4cPP) into 1-hydroxy-2-methyl-2-(E)-butenyl 4-diphosphate. In Pseudomonas entomophila (strain L48), this protein is 4-hydroxy-3-methylbut-2-en-1-yl diphosphate synthase (flavodoxin).